The following is an 822-amino-acid chain: Integrator complex assembly factor BRAT1 (822 aa).

Residues 100–200 are required for interaction with NDFIP1; that stretch reads LGLFGESGAP…WPMCAQKIVN (101 aa). HEAT repeat units follow at residues 495–531 and 544–576; these read LLFLGELFPILQKRLCSPCWEVRDSALEFLTHLIRHW and SEVPTLALQLLQDPESYVRASAVGAAGQLSSQG. S743 carries the phosphoserine modification. Residues 820 to 822 carry the BRAT1-like motif motif; sequence DCY. C821 contributes to the Zn(2+) binding site.

The protein belongs to the BRAT1 family. As to quaternary structure, part of the multiprotein complex composed of BRAT1, WDR73, as well as integrator complex subunits INTS9 and INTS11. Interacts with BRCA1 and ATM. Interacts with MTOR and RPTOR. Interacts with NDFIP1. Interacts with SMC1A and PRKDC. Ubiquitinated by NEDD4, NEDD4L and ITCH; mono- and polyubiquitinated forms are detected. As to expression, high levels detected in the cortex and much lower levels detected in the cerebellum, spinal cord and lung (at protein level).

Its subcellular location is the nucleus. The protein localises to the cytoplasm. Component of a multiprotein complex required for the assembly of the RNA endonuclease module of the integrator complex. Associates with INTS9 and INTS11 in the cytoplasm and blocks the active site of INTS11 to inhibit the endonuclease activity of INTS11 before formation of the full integrator complex. Following dissociation of WDR73 of the complex, BRAT1 facilitates the nuclear import of the INTS9-INTS11 heterodimer. In the nucleus, INTS4 is integrated to the INTS9-INTS11 heterodimer and BRAT1 is released from the mature RNA endonuclease module by inositol hexakisphosphate (InsP6). BRAT1 is also involved in DNA damage response; activates kinases ATM, SMC1A and PRKDC by modulating their phosphorylation status following ionizing radiation (IR) stress. Plays a role in regulating mitochondrial function and cell proliferation. Required for protein stability of MTOR and MTOR-related proteins, and cell cycle progress by growth factors. This chain is Integrator complex assembly factor BRAT1, found in Mus musculus (Mouse).